We begin with the raw amino-acid sequence, 196 residues long: Imidazoleglycerol-phosphate dehydratase (196 aa).

Belongs to the imidazoleglycerol-phosphate dehydratase family.

It localises to the cytoplasm. The catalysed reaction is D-erythro-1-(imidazol-4-yl)glycerol 3-phosphate = 3-(imidazol-4-yl)-2-oxopropyl phosphate + H2O. It participates in amino-acid biosynthesis; L-histidine biosynthesis; L-histidine from 5-phospho-alpha-D-ribose 1-diphosphate: step 6/9. The sequence is that of Imidazoleglycerol-phosphate dehydratase from Nitratidesulfovibrio vulgaris (strain DSM 19637 / Miyazaki F) (Desulfovibrio vulgaris).